The primary structure comprises 223 residues: Putative lipoprotein NMB1126/NMB1164 (223 aa).

The N-terminal stretch at 1-19 (MKTVSTAVVLAAAAVSLTG) is a signal peptide. Residue Cys-20 is the site of N-palmitoyl cysteine attachment. Residue Cys-20 is the site of S-diacylglycerol cysteine attachment.

The protein localises to the cell membrane. This Neisseria meningitidis serogroup B (strain ATCC BAA-335 / MC58) protein is Putative lipoprotein NMB1126/NMB1164.